Reading from the N-terminus, the 174-residue chain is MTKLIIMTICLIISFIFMQMKHPLSMGLMLLTQTFLTCLLTGIYVKTFWFSYVLFLIFLGGMLILFIYVHSLSSNEMFTMSFNLTTLSLLIFFLMTLFFFIIDKSLIEQFISNMEMEMFSFNNNLINENILFLNKMYNFPTNLITLLLINYLFLTLLVTVKITKKFYGPLRPMN.

Helical transmembrane passes span 4 to 24, 25 to 45, 48 to 68, 82 to 102, and 143 to 163; these read LIIM…KHPL, SMGL…GIYV, FWFS…LFIY, FNLT…FFII, and LITL…VKIT.

This sequence belongs to the complex I subunit 6 family.

The protein resides in the mitochondrion membrane. It carries out the reaction a ubiquinone + NADH + 5 H(+)(in) = a ubiquinol + NAD(+) + 4 H(+)(out). Functionally, core subunit of the mitochondrial membrane respiratory chain NADH dehydrogenase (Complex I) that is believed to belong to the minimal assembly required for catalysis. Complex I functions in the transfer of electrons from NADH to the respiratory chain. The immediate electron acceptor for the enzyme is believed to be ubiquinone. This is NADH-ubiquinone oxidoreductase chain 6 (ND6) from Anopheles quadrimaculatus (Common malaria mosquito).